Consider the following 177-residue polypeptide: Antigen TpF1 (177 aa).

This sequence belongs to the Dps family. In terms of assembly, homodecamer; either linked or stabilized by disulfide bonds.

Functionally, may play an important structural role in the outer membrane. The chain is Antigen TpF1 (tpf1) from Treponema pallidum (strain Nichols).